A 197-amino-acid polypeptide reads, in one-letter code: Large ribosomal subunit protein bL25 (197 aa).

Belongs to the bacterial ribosomal protein bL25 family. CTC subfamily. Part of the 50S ribosomal subunit; part of the 5S rRNA/L5/L18/L25 subcomplex. Contacts the 5S rRNA. Binds to the 5S rRNA independently of L5 and L18.

Its function is as follows. This is one of the proteins that binds to the 5S RNA in the ribosome where it forms part of the central protuberance. The protein is Large ribosomal subunit protein bL25 of Streptomyces avermitilis (strain ATCC 31267 / DSM 46492 / JCM 5070 / NBRC 14893 / NCIMB 12804 / NRRL 8165 / MA-4680).